A 233-amino-acid polypeptide reads, in one-letter code: Hydroxyacylglutathione hydrolase (233 aa).

The Zn(2+) site is built by His-52, His-54, Asp-56, His-57, His-108, Asp-125, and His-163.

Belongs to the metallo-beta-lactamase superfamily. Glyoxalase II family. In terms of assembly, monomer. The cofactor is Zn(2+).

It catalyses the reaction an S-(2-hydroxyacyl)glutathione + H2O = a 2-hydroxy carboxylate + glutathione + H(+). The protein operates within secondary metabolite metabolism; methylglyoxal degradation; (R)-lactate from methylglyoxal: step 2/2. In terms of biological role, thiolesterase that catalyzes the hydrolysis of S-D-lactoyl-glutathione to form glutathione and D-lactic acid. This Histophilus somni (strain 129Pt) (Haemophilus somnus) protein is Hydroxyacylglutathione hydrolase.